The sequence spans 302 residues: Recombination-associated protein RdgC (302 aa).

Belongs to the RdgC family.

Its subcellular location is the cytoplasm. It is found in the nucleoid. Its function is as follows. May be involved in recombination. This Xylella fastidiosa (strain 9a5c) protein is Recombination-associated protein RdgC.